The sequence spans 183 residues: Ribosome rescue factor SmrB (183 aa).

The Smr domain maps to 98-173 (LDLHGLTQQQ…GDAALLVLIE (76 aa)).

This sequence belongs to the SmrB family. Associates with collided ribosomes, but not with correctly translating polysomes.

In terms of biological role, acts as a ribosome collision sensor. Detects stalled/collided disomes (pairs of ribosomes where the leading ribosome is stalled and a second ribosome has collided with it) and endonucleolytically cleaves mRNA at the 5' boundary of the stalled ribosome. Stalled/collided disomes form a new interface (primarily via the 30S subunits) that binds SmrB. Cleaved mRNA becomes available for tmRNA ligation, leading to ribosomal subunit dissociation and rescue of stalled ribosomes. The sequence is that of Ribosome rescue factor SmrB from Klebsiella pneumoniae (strain 342).